The primary structure comprises 151 residues: Large ribosomal subunit protein uL22 (151 aa).

The protein belongs to the universal ribosomal protein uL22 family. Part of the 50S ribosomal subunit.

This protein binds specifically to 23S rRNA. It makes multiple contacts with different domains of the 23S rRNA in the assembled 50S subunit and ribosome. Functionally, the globular domain of the protein is located near the polypeptide exit tunnel on the outside of the subunit, while an extended beta-hairpin is found that lines the wall of the exit tunnel in the center of the 70S ribosome. The protein is Large ribosomal subunit protein uL22 of Thermofilum pendens (strain DSM 2475 / Hrk 5).